A 341-amino-acid chain; its full sequence is DER1-like family member protein 1 (341 aa).

Over 1–41 the chain is Cytoplasmic; sequence MAGPRNVRTLHGNGGRNNDVMGPKEFWLNIPPITRTLFTLA. The helical transmembrane segment at 42–62 threads the bilayer; the sequence is IVMTIVGRLNLINPWYFIYVW. Residues 63-122 lie on the Lumenal side of the membrane; that stretch reads NLTFKKVQIWRLLTSCVMLSSRAMPALMELYSIYDRSSQLERGHFGPGLSNRRGPMVTVD. The chain crosses the membrane as a helical span at residues 123-143; that stretch reads YAYYLCFCILAITTATTIIYG. At 144–170 the chain is on the cytoplasmic side; it reads SYYPVVLTSGFISCITYTWSIDNANVQ. The helical transmembrane segment at 171–191 threads the bilayer; it reads IMFYGLIPVWGKYFPLIQLFI. Residue serine 192 is a topological domain, lumenal. A helical transmembrane segment spans residues 193-213; sequence FVFNEGDFVISLIGFTTGYLY. Residues 214–341 are Cytoplasmic-facing; the sequence is TCLDTHTLGP…GQTNSPSDSQ (128 aa). 2 stretches are compositionally biased toward polar residues: residues 276–286 and 296–341; these read SSQRETRTFSG and ATLS…SDSQ. Residues 276-341 are disordered; sequence SSQRETRTFS…GQTNSPSDSQ (66 aa).

The protein belongs to the derlin family.

It is found in the endoplasmic reticulum membrane. May be involved in the degradation process of some misfolded endoplasmic reticulum (ER) luminal proteins. Its precise role is however unclear and its inability to complement der1 mutations, suggests either that it is not involved in degradation process of misfolded proteins, or that it participates in the destruction of specific misfolded ER luminal proteins. The sequence is that of DER1-like family member protein 1 (DFM1) from Saccharomyces cerevisiae (strain ATCC 204508 / S288c) (Baker's yeast).